The sequence spans 362 residues: Ribosome-binding ATPase YchF (362 aa).

An OBG-type G domain is found at 3 to 255 (FKCGIIGLPN…MNEDEQKYFM (253 aa)). Residue 12–17 (NVGKST) participates in ATP binding. Mg(2+)-binding residues include S16 and T36. The region spanning 277-360 (NLITFFTAGI…QDGDIINFLF (84 aa)) is the TGS domain.

The protein belongs to the TRAFAC class OBG-HflX-like GTPase superfamily. OBG GTPase family. YchF/OLA1 subfamily. Mg(2+) is required as a cofactor.

Its function is as follows. ATPase that binds to both the 70S ribosome and the 50S ribosomal subunit in a nucleotide-independent manner. The sequence is that of Ribosome-binding ATPase YchF from Buchnera aphidicola subsp. Schizaphis graminum (strain Sg).